The following is a 476-amino-acid chain: Sulfate adenylyltransferase subunit 1 (476 aa).

One can recognise a tr-type G domain in the interval 24-239 (KSLLRFLTCG…LLETVDVDHE (216 aa)). Positions 33–40 (GSVDDGKS) are G1. 33–40 (GSVDDGKS) serves as a coordination point for GTP. A G2 region spans residues 91–95 (GITID). The interval 112–115 (DTPG) is G3. GTP-binding positions include 112-116 (DTPGH) and 167-170 (NKMD). The segment at 167–170 (NKMD) is G4. The tract at residues 205–207 (SAL) is G5.

This sequence belongs to the TRAFAC class translation factor GTPase superfamily. Classic translation factor GTPase family. CysN/NodQ subfamily. Heterodimer composed of CysD, the smaller subunit, and CysN.

It catalyses the reaction sulfate + ATP + H(+) = adenosine 5'-phosphosulfate + diphosphate. It functions in the pathway sulfur metabolism; hydrogen sulfide biosynthesis; sulfite from sulfate: step 1/3. Functionally, with CysD forms the ATP sulfurylase (ATPS) that catalyzes the adenylation of sulfate producing adenosine 5'-phosphosulfate (APS) and diphosphate, the first enzymatic step in sulfur assimilation pathway. APS synthesis involves the formation of a high-energy phosphoric-sulfuric acid anhydride bond driven by GTP hydrolysis by CysN coupled to ATP hydrolysis by CysD. The polypeptide is Sulfate adenylyltransferase subunit 1 (Vibrio campbellii (strain ATCC BAA-1116)).